The primary structure comprises 232 residues: Large ribosomal subunit protein uL1 (232 aa).

The protein belongs to the universal ribosomal protein uL1 family. Part of the 50S ribosomal subunit.

Its function is as follows. Binds directly to 23S rRNA. The L1 stalk is quite mobile in the ribosome, and is involved in E site tRNA release. Functionally, protein L1 is also a translational repressor protein, it controls the translation of the L11 operon by binding to its mRNA. In Maricaulis maris (strain MCS10) (Caulobacter maris), this protein is Large ribosomal subunit protein uL1.